A 413-amino-acid polypeptide reads, in one-letter code: Gamma-glutamyl phosphate reductase (413 aa).

The protein belongs to the gamma-glutamyl phosphate reductase family.

Its subcellular location is the cytoplasm. It carries out the reaction L-glutamate 5-semialdehyde + phosphate + NADP(+) = L-glutamyl 5-phosphate + NADPH + H(+). It participates in amino-acid biosynthesis; L-proline biosynthesis; L-glutamate 5-semialdehyde from L-glutamate: step 2/2. In terms of biological role, catalyzes the NADPH-dependent reduction of L-glutamate 5-phosphate into L-glutamate 5-semialdehyde and phosphate. The product spontaneously undergoes cyclization to form 1-pyrroline-5-carboxylate. The polypeptide is Gamma-glutamyl phosphate reductase (Anoxybacillus flavithermus (strain DSM 21510 / WK1)).